A 62-amino-acid polypeptide reads, in one-letter code: MMFKLGVLLTICLLLFPLTGTALDGDQLAEHMLDISSGINDRWFDPVRKCCMRPVCTCPCCS.

Residues 1–22 (MMFKLGVLLTICLLLFPLTGTA) form the signal peptide. The propeptide occupies 23 to 49 (LDGDQLAEHMLDISSGINDRWFDPVRK). 3 cysteine pairs are disulfide-bonded: Cys-50-Cys-60, Cys-51-Cys-58, and Cys-56-Cys-61.

It belongs to the conotoxin M superfamily. As to expression, expressed by the venom duct.

It localises to the secreted. In Conus regius (Crown cone), this protein is Conotoxin reg3.5.